The sequence spans 239 residues: DNA repair protein RecO (239 aa).

It belongs to the RecO family.

Functionally, involved in DNA repair and RecF pathway recombination. The protein is DNA repair protein RecO of Glaesserella parasuis serovar 5 (strain SH0165) (Haemophilus parasuis).